The chain runs to 613 residues: MRLLLIHARSFSFEVRDKAVENPEPLTEELKRGSADNTLVVFTTVEENDNDSPSFLERVADDVLDVAGKVKASSVFLYPYAHLSPNLAPPPKAITILNALYETLKGKASIPVYRAPFGWYKAFNISCLGHPLSELSRTITPQESAPQRKPYTRDYYVIVSPDGSIHDPASYSFSERDADLKVLVDKEVFKRELEGKEQPRYIDYCLKFGFEWEPLSDVGHMRYGPYATVMLELLDDYSYQVAKSLGIPVFKVKGTNMFRLSDKAISEHAGLFGERMYITESDEELVMRYAACFQQFAMIKDWVLSYRNLPLGMLEIADSYRYEQPGETVLCFRLRRFYMPDLHIFVKDLKEAMDVGLRLHAKIFEEIRRIGRDYVSLYNVSKEFFDQNKDYLVELARREGKPILVRVLEGAKYYWVLNVEYHIIDELKRPREIATFQFDIGNAQRFGIKYRDEGNNIKYPVIIHTAILGSIERFIFALLDTAAINEANGKVPALPTWITPVQVRVIPVSSGYNEGAIELARRIEEAGFRVEVDDRDETVGRKIRDAETLWVPYIVVFGEREAKTGSLSVRVRGVGQVSMSIEELLNRLNEETKGYPRKPLTAPMLLSIRPPLP.

The editing domain stretch occupies residues 1 to 147 (MRLLLIHARS…TITPQESAPQ (147 aa)). Catalytic stretches follow at residues 199 to 495 (PRYI…PALP) and 200 to 495 (RYID…PALP). Zn(2+)-binding residues include C292, H343, and H464.

The protein belongs to the class-II aminoacyl-tRNA synthetase family. Homodimer. Zn(2+) serves as cofactor.

It localises to the cytoplasm. It carries out the reaction tRNA(Thr) + L-threonine + ATP = L-threonyl-tRNA(Thr) + AMP + diphosphate + H(+). Its function is as follows. Catalyzes the attachment of threonine to tRNA(Thr) in a two-step reaction: L-threonine is first activated by ATP to form Thr-AMP and then transferred to the acceptor end of tRNA(Thr). Also edits incorrectly charged L-seryl-tRNA(Thr). The sequence is that of Threonine--tRNA ligase from Caldivirga maquilingensis (strain ATCC 700844 / DSM 13496 / JCM 10307 / IC-167).